Consider the following 188-residue polypeptide: Ribosome-recycling factor (188 aa).

It belongs to the RRF family.

It is found in the cytoplasm. Functionally, responsible for the release of ribosomes from messenger RNA at the termination of protein biosynthesis. May increase the efficiency of translation by recycling ribosomes from one round of translation to another. This chain is Ribosome-recycling factor, found in Blochmanniella floridana.